Here is a 66-residue protein sequence, read N- to C-terminus: MVAKQRIRMANEKHSKNITQRGNVAKTSRNAPGEKASVGPWLLALFIFVVCGSAIFQIIQSIRMGM.

The segment at 1–33 (MVAKQRIRMANEKHSKNITQRGNVAKTSRNAPG) is disordered. Residues 1 to 38 (MVAKQRIRMANEKHSKNITQRGNVAKTSRNAPGEKASV) lie on the Cytoplasmic side of the membrane. Residues 17–30 (NITQRGNVAKTSRN) show a composition bias toward polar residues. The helical transmembrane segment at 39 to 59 (GPWLLALFIFVVCGSAIFQII) threads the bilayer. Topologically, residues 60–66 (QSIRMGM) are extracellular.

This sequence belongs to the RAMP4 family. Interacts with SEC61B, SEC61A1 and the SEC61 complex. Interacts with CANX.

It is found in the membrane. The protein localises to the endoplasmic reticulum membrane. Functionally, interacts with target proteins during their translocation into the lumen of the endoplasmic reticulum. Protects unfolded target proteins against degradation during ER stress. May facilitate glycosylation of target proteins after termination of ER stress. May modulate the use of N-glycosylation sites on target proteins. In Pongo abelii (Sumatran orangutan), this protein is Stress-associated endoplasmic reticulum protein 1 (SERP1).